The sequence spans 221 residues: Alpha-ketoglutarate-dependent dioxygenase alkB homolog 7, mitochondrial (221 aa).

A mitochondrion-targeting transit peptide spans 1–23 (MAGSRRLAMRLLSGCAWVRGSDS). Residues His-121 and Asp-123 each contribute to the Fe cation site. Position 165 (Tyr-165) interacts with 2-oxoglutarate. Residue His-177 participates in Fe cation binding. 2-oxoglutarate is bound by residues 197 to 199 (RIS) and Arg-203.

This sequence belongs to the alkB family. Fe(2+) serves as cofactor. Widely expressed.

Its subcellular location is the mitochondrion matrix. Its function is as follows. May function as protein hydroxylase; can catalyze auto-hydroxylation at Leu-110 (in vitro), but this activity may be due to the absence of the true substrate. Required to induce programmed necrosis in response to DNA damage caused by cytotoxic alkylating agents. Acts by triggering the collapse of mitochondrial membrane potential and loss of mitochondrial function that leads to energy depletion and cell death. ALKBH7-mediated necrosis is probably required to prevent the accumulation of cells with DNA damage. Does not display DNA demethylase activity. Involved in fatty acid metabolism. The sequence is that of Alpha-ketoglutarate-dependent dioxygenase alkB homolog 7, mitochondrial (Alkbh7) from Mus musculus (Mouse).